Consider the following 255-residue polypeptide: Ribonuclease PH (255 aa).

Phosphate contacts are provided by residues R86 and 124 to 126 (GTR).

Belongs to the RNase PH family. As to quaternary structure, homohexameric ring arranged as a trimer of dimers.

The catalysed reaction is tRNA(n+1) + phosphate = tRNA(n) + a ribonucleoside 5'-diphosphate. Phosphorolytic 3'-5' exoribonuclease that plays an important role in tRNA 3'-end maturation. Removes nucleotide residues following the 3'-CCA terminus of tRNAs; can also add nucleotides to the ends of RNA molecules by using nucleoside diphosphates as substrates, but this may not be physiologically important. Probably plays a role in initiation of 16S rRNA degradation (leading to ribosome degradation) during starvation. In Aquifex aeolicus (strain VF5), this protein is Ribonuclease PH.